The sequence spans 454 residues: Cysteine--tRNA ligase (454 aa).

Residue C27 participates in Zn(2+) binding. Positions P29–H39 match the 'HIGH' region motif. 3 residues coordinate Zn(2+): D207, H232, and E236. The 'KMSKS' region motif lies at K265–S269. K268 serves as a coordination point for ATP.

The protein belongs to the class-I aminoacyl-tRNA synthetase family. The cofactor is Zn(2+).

The protein localises to the cytoplasm. It catalyses the reaction tRNA(Cys) + L-cysteine + ATP = L-cysteinyl-tRNA(Cys) + AMP + diphosphate. The polypeptide is Cysteine--tRNA ligase (Thermoplasma volcanium (strain ATCC 51530 / DSM 4299 / JCM 9571 / NBRC 15438 / GSS1)).